The following is a 525-amino-acid chain: Zinc finger protein 678 (525 aa).

C2H2-type zinc fingers lie at residues 97–119 (FQCI…KRIH), 125–147 (YKCE…KRIH), 153–175 (YKCD…KKIH), 181–203 (YKCD…KKIH), 209–231 (YPCE…KRIH), 237–259 (YKCK…KRIH), 265–287 (YKCE…RRIH), 293–315 (YKCE…KRIH), 321–343 (YQCE…KRIH), 349–371 (YKCE…KRIH), 377–399 (YKCK…RRIH), 405–427 (YKCE…KRIH), 433–455 (YKCK…KRIH), and 461–483 (YKCE…KRIH). The C2H2-type 15; degenerate zinc finger occupies 489-511 (YKCKECGKGFYQSSIHSKYKRIY).

Belongs to the krueppel C2H2-type zinc-finger protein family.

It is found in the nucleus. Functionally, may be involved in transcriptional regulation. The sequence is that of Zinc finger protein 678 (ZNF678) from Homo sapiens (Human).